A 67-amino-acid chain; its full sequence is Conotoxin TxMMSK-01 (67 aa).

The first 20 residues, methionine 1 to alanine 20, serve as a signal peptide directing secretion. The propeptide occupies valine 21–arginine 53. Intrachain disulfides connect cysteine 54/cysteine 66, cysteine 55/cysteine 62, and cysteine 59/cysteine 65. Proline 64 bears the 4-hydroxyproline mark. Cysteine amide is present on cysteine 66.

It belongs to the conotoxin M superfamily. In terms of tissue distribution, expressed by the venom duct.

It is found in the secreted. In Conus textile (Cloth-of-gold cone), this protein is Conotoxin TxMMSK-01.